Here is a 609-residue protein sequence, read N- to C-terminus: Alpha-fetoprotein (609 aa).

The first 18 residues, Met-1–Ser-18, serve as a signal peptide directing secretion. Albumin domains lie at Arg-19–Thr-210, Lys-211–Gln-402, and Lys-403–Ser-601. A Cu(2+)-binding site is contributed by His-22. Asn-42 carries an N-linked (GlcNAc...) asparagine glycan. Cystine bridges form between Cys-99–Cys-114, Cys-113–Cys-124, Cys-148–Cys-193, Cys-192–Cys-201, Cys-224–Cys-270, Cys-269–Cys-277, Cys-289–Cys-303, and Cys-302–Cys-313. A phosphoserine mark is found at Ser-111, Ser-115, and Ser-117. N-linked (GlcNAc...) asparagine glycosylation occurs at Asn-251. Ser-344 is subject to Phosphoserine. Cystine bridges form between Cys-384–Cys-393, Cys-416–Cys-462, Cys-461–Cys-472, Cys-485–Cys-501, Cys-500–Cys-511, Cys-538–Cys-583, and Cys-582–Cys-591. The residue at position 444 (Ser-444) is a Phosphoserine.

This sequence belongs to the ALB/AFP/VDB family. In terms of assembly, dimeric and trimeric forms have been found in addition to the monomeric form. In terms of tissue distribution, plasma. Synthesized by the fetal liver and yolk sac.

The protein resides in the secreted. In terms of biological role, binds copper, nickel, and fatty acids as well as, and bilirubin less well than, serum albumin. This is Alpha-fetoprotein (AFP) from Pan troglodytes (Chimpanzee).